An 85-amino-acid chain; its full sequence is Acylphosphatase (85 aa).

The Acylphosphatase-like domain maps to 3 to 85; that stretch reads AARFVVSGVV…PARFRRLKTL (83 aa). Residues arginine 18 and asparagine 36 contribute to the active site. The segment at 66–85 is disordered; that stretch reads PPRSRRSRARPARFRRLKTL.

Belongs to the acylphosphatase family.

The catalysed reaction is an acyl phosphate + H2O = a carboxylate + phosphate + H(+). This chain is Acylphosphatase (acyP), found in Xanthomonas axonopodis pv. citri (strain 306).